An 840-amino-acid chain; its full sequence is Exocyst complex component 7 (840 aa).

The interval 1–112 (MSAPPRLSAR…ATSTTSPFSY (112 aa)) is disordered. The span at 19–31 (SNAPSPTSPTGLK) shows a compositional bias: polar residues. Composition is skewed to low complexity over residues 50–73 (KSSV…TLPK) and 83–111 (QQQQ…SPFS). The stretch at 193 to 227 (KNNATSELTEQDDQLENDKRDLQFIKEQLEKNNSM) forms a coiled coil. The tract at residues 601–638 (QDNNNSNSNSNAPSSTSSNSKSSSSSSSSSSSNSASST) is disordered. A compositionally biased stretch (low complexity) spans 603–637 (NNNSNSNSNAPSSTSSNSKSSSSSSSSSSSNSASS).

The protein belongs to the EXO70 family. As to quaternary structure, the exocyst complex is composed of sec3/exoc1, sec5/exoc2, sec6/exoc3, sec8/exoc4, sec10/exoc5, sec15/exoc6, exo70/exoc7 and exo84/exoc8.

It localises to the cytoplasm. Its subcellular location is the cytosol. It is found in the cell membrane. The protein localises to the midbody. The protein resides in the midbody ring. Its function is as follows. Component of the exocyst complex involved in the docking of exocytic vesicles with fusion sites on the plasma membrane. The chain is Exocyst complex component 7 (exoc7) from Dictyostelium discoideum (Social amoeba).